We begin with the raw amino-acid sequence, 425 residues long: Paired box pox-neuro protein (425 aa).

A DNA-binding region (paired) is located at residues 5-132 (GQAGVNQLGG…SSINRILRNS (128 aa)). The segment at 8 to 64 (GVNQLGGVFVNGRPLPDCVRRRIVDLALCGVRPCDISRQLLVSHGCVSKILTRFYET) is PAI subdomain. Residues 84–132 (TVVKKIIRLKEENSGMFAWEIREQLQQQRVCDPSSVPSISSINRILRNS) form an RED subdomain region. Disordered regions lie at residues 159-188 (QAGS…AATP), 297-358 (TKSE…RKRN), and 383-425 (LESS…EVVN). Pro residues predominate over residues 172–185 (APPPPVTVAPPTPA). Composition is skewed to low complexity over residues 323-332 (SSPAALSLTA) and 340-349 (GSAPEASPGS). Over residues 402–425 (TPEDEDPAEAEEEQEEEDSVEVVN) the composition is skewed to acidic residues.

In terms of tissue distribution, central and peripheral nervous systems.

The protein resides in the nucleus. Its function is as follows. Transcriptional regulator that specifies poly-innervated organs (chemosensory bristle). Also controls the number of neurons. The protein is Paired box pox-neuro protein (Poxn) of Drosophila melanogaster (Fruit fly).